The sequence spans 491 residues: Anthranilate synthase component 1 (491 aa).

Residues Ser-49 and 271 to 273 (PYL) contribute to the L-tryptophan site. Chorismate is bound at residue 306-307 (GT). Glu-333 contributes to the Mg(2+) binding site. Chorismate contacts are provided by residues Tyr-421, Arg-441, 455–457 (GAG), and Gly-457. Glu-470 contributes to the Mg(2+) binding site.

The protein belongs to the anthranilate synthase component I family. Heterotetramer consisting of two non-identical subunits: a beta subunit (TrpG) and a large alpha subunit (TrpE). It depends on Mg(2+) as a cofactor.

The enzyme catalyses chorismate + L-glutamine = anthranilate + pyruvate + L-glutamate + H(+). The protein operates within amino-acid biosynthesis; L-tryptophan biosynthesis; L-tryptophan from chorismate: step 1/5. Feedback inhibited by tryptophan. In terms of biological role, part of a heterotetrameric complex that catalyzes the two-step biosynthesis of anthranilate, an intermediate in the biosynthesis of L-tryptophan. In the first step, the glutamine-binding beta subunit (TrpG) of anthranilate synthase (AS) provides the glutamine amidotransferase activity which generates ammonia as a substrate that, along with chorismate, is used in the second step, catalyzed by the large alpha subunit of AS (TrpE) to produce anthranilate. In the absence of TrpG, TrpE can synthesize anthranilate directly from chorismate and high concentrations of ammonia. The chain is Anthranilate synthase component 1 (trpE) from Neisseria gonorrhoeae (strain ATCC 700825 / FA 1090).